Here is a 202-residue protein sequence, read N- to C-terminus: Inner membrane-spanning protein YciB (202 aa).

6 consecutive transmembrane segments (helical) span residues 3–23, 46–66, 74–94, 100–120, 145–165, and 173–193; these read FFLD…AGAA, ILIA…IVWL, MLWV…VFHN, WKPT…ALLF, LAWI…AYGY, and FKLF…GFYL.

This sequence belongs to the YciB family.

It localises to the cell inner membrane. Plays a role in cell envelope biogenesis, maintenance of cell envelope integrity and membrane homeostasis. The protein is Inner membrane-spanning protein YciB of Azoarcus sp. (strain BH72).